The following is a 126-amino-acid chain: Anti-adapter protein IraD (126 aa).

It belongs to the GpW/Gp25 family. IraD subfamily. As to quaternary structure, interacts with RssB.

The protein resides in the cytoplasm. Functionally, inhibits RpoS proteolysis by regulating RssB activity, thereby increasing the stability of the sigma stress factor RpoS during oxidative stress. Its effect on RpoS stability is due to its interaction with RssB, which probably blocks the interaction of RssB with RpoS, and the consequent delivery of the RssB-RpoS complex to the ClpXP protein degradation pathway. The polypeptide is Anti-adapter protein IraD (Salmonella enteritidis PT4 (strain P125109)).